The sequence spans 281 residues: MFTIQKPDTVSHLSHFHESKSLGSLPFPSDKERKQDTNFNILEETYDKNENWSQDKKGGEEGENKSKSEDEHSSLDNNRSQLKNRPIGQLKSTGSEGISLSSSEEEVRSPPEGAEIMQLEGDTPANDTANGFEKWAGSPLEDNGYASSSLSIDSPDSVSASTWQETTLPAPTTTPQENPETEDSDVESSSDSDSISVTLSEAFQSLQDKEKLKEREKEKHHAQLTMYRRLALLRWIRALQQKVRDQQNRLQESFDTILDNRKEMLRHMQHGYNKTPTKEAV.

The segment covering 1–12 has biased composition (polar residues); that stretch reads MFTIQKPDTVSH. Residues 1–197 form a disordered region; the sequence is MFTIQKPDTV…SSSDSDSISV (197 aa). The segment covering 45–74 has biased composition (basic and acidic residues); the sequence is TYDKNENWSQDKKGGEEGENKSKSEDEHSS. 3 stretches are compositionally biased toward low complexity: residues 92–102, 147–161, and 169–178; these read STGSEGISLSS, SSSL…VSAS, and PAPTTTPQEN. A compositionally biased stretch (acidic residues) spans 179–190; the sequence is PETEDSDVESSS. A coiled-coil region spans residues 198 to 257; it reads TLSEAFQSLQDKEKLKEREKEKHHAQLTMYRRLALLRWIRALQQKVRDQQNRLQESFDTI.

Belongs to the UPF0500 family.

The chain is UPF0500 protein C1orf216 homolog from Xenopus laevis (African clawed frog).